Reading from the N-terminus, the 379-residue chain is Protein-glutamate methylesterase/protein-glutamine glutaminase (379 aa).

The region spanning lysine 4–leucine 121 is the Response regulatory domain. Aspartate 55 carries the 4-aspartylphosphate modification. Residues serine 186–alanine 379 form the CheB-type methylesterase domain. Catalysis depends on residues serine 198, histidine 225, and aspartate 323.

It belongs to the CheB family. Post-translationally, phosphorylated by CheA. Phosphorylation of the N-terminal regulatory domain activates the methylesterase activity.

Its subcellular location is the cytoplasm. It catalyses the reaction [protein]-L-glutamate 5-O-methyl ester + H2O = L-glutamyl-[protein] + methanol + H(+). The enzyme catalyses L-glutaminyl-[protein] + H2O = L-glutamyl-[protein] + NH4(+). Its function is as follows. Involved in chemotaxis. Part of a chemotaxis signal transduction system that modulates chemotaxis in response to various stimuli. Catalyzes the demethylation of specific methylglutamate residues introduced into the chemoreceptors (methyl-accepting chemotaxis proteins or MCP) by CheR. Also mediates the irreversible deamidation of specific glutamine residues to glutamic acid. This Pseudoalteromonas atlantica (strain T6c / ATCC BAA-1087) protein is Protein-glutamate methylesterase/protein-glutamine glutaminase.